A 283-amino-acid chain; its full sequence is Phosphatidylglycerol--prolipoprotein diacylglyceryl transferase (283 aa).

4 helical membrane-spanning segments follow: residues 19–39 (IGPI…LIGV), 59–79 (LSIW…VLFQ), 90–110 (IIAI…GTLA), and 120–140 (VPFW…QAIG). Position 141 (R141) interacts with a 1,2-diacyl-sn-glycero-3-phospho-(1'-sn-glycerol). 3 helical membrane-spanning segments follow: residues 181-201 (TFLY…TLFF), 212-232 (VGTL…WIEG), and 245-265 (IAQV…AWLY).

It belongs to the Lgt family.

It localises to the cell inner membrane. The catalysed reaction is L-cysteinyl-[prolipoprotein] + a 1,2-diacyl-sn-glycero-3-phospho-(1'-sn-glycerol) = an S-1,2-diacyl-sn-glyceryl-L-cysteinyl-[prolipoprotein] + sn-glycerol 1-phosphate + H(+). It functions in the pathway protein modification; lipoprotein biosynthesis (diacylglyceryl transfer). In terms of biological role, catalyzes the transfer of the diacylglyceryl group from phosphatidylglycerol to the sulfhydryl group of the N-terminal cysteine of a prolipoprotein, the first step in the formation of mature lipoproteins. The protein is Phosphatidylglycerol--prolipoprotein diacylglyceryl transferase of Nostoc sp. (strain PCC 7120 / SAG 25.82 / UTEX 2576).